Reading from the N-terminus, the 209-residue chain is LexA repressor (209 aa).

Residues 30–50 (RVEIAREIGFKSPNAAEEHLK) constitute a DNA-binding region (H-T-H motif). Residues Ser126 and Lys163 each act as for autocatalytic cleavage activity in the active site.

It belongs to the peptidase S24 family. Homodimer.

The catalysed reaction is Hydrolysis of Ala-|-Gly bond in repressor LexA.. In terms of biological role, represses a number of genes involved in the response to DNA damage (SOS response), including recA and lexA. In the presence of single-stranded DNA, RecA interacts with LexA causing an autocatalytic cleavage which disrupts the DNA-binding part of LexA, leading to derepression of the SOS regulon and eventually DNA repair. The protein is LexA repressor of Glaesserella parasuis serovar 5 (strain SH0165) (Haemophilus parasuis).